Here is a 213-residue protein sequence, read N- to C-terminus: MRLRHKPWALDYMKEQSSIYIADPSTLKGNWSNEFKNENPIYIEVGSGKGAFITGMAKQYPEVNFVAIELFESVAVAIVQKMVEEPLANVRVLTVDAKDLRDFFEKGEVARVYLNFSDPWPKSRHAKRRLTYKTFLATYEDILPEKGQIHFKTDNRKLFESSLMTMSAYGMTFDWMSLDLHANEPENNVRTEYEERFSAMGQPIYRMEATYTK.

Positions 44, 69, 96, and 118 each coordinate S-adenosyl-L-methionine. Residue Asp-118 is part of the active site. Substrate contacts are provided by residues Lys-122, Asp-154, and 191-194; that span reads TEYE.

The protein belongs to the class I-like SAM-binding methyltransferase superfamily. TrmB family.

The catalysed reaction is guanosine(46) in tRNA + S-adenosyl-L-methionine = N(7)-methylguanosine(46) in tRNA + S-adenosyl-L-homocysteine. Its pathway is tRNA modification; N(7)-methylguanine-tRNA biosynthesis. Catalyzes the formation of N(7)-methylguanine at position 46 (m7G46) in tRNA. The protein is tRNA (guanine-N(7)-)-methyltransferase of Exiguobacterium sibiricum (strain DSM 17290 / CCUG 55495 / CIP 109462 / JCM 13490 / 255-15).